The chain runs to 433 residues: Voltage-gated potassium channel regulatory subunit KCNG3 (433 aa).

Residues 1-165 lie on the Cytoplasmic side of the membrane; it reads MTFGRGGAAS…RTFEEPTSSL (165 aa). A helical membrane pass occupies residues 166-187; the sequence is AAQILASVSVVFVIVSMVVLCA. Over 188–217 the chain is Extracellular; the sequence is STLPDWRAAVADNRSLDDRSRYSASPGREP. Residues 218–239 form a helical membrane-spanning segment; it reads SGIIEAICIGWFTAECIVRFIV. Residues 240 to 250 are Cytoplasmic-facing; it reads SKNKCEFVKRP. The helical transmembrane segment at 251-271 threads the bilayer; sequence LNIIDLLAITPYYISVLMTVF. The Extracellular portion of the chain corresponds to 272-281; that stretch reads TGENSQLQRA. Residues 282–302 traverse the membrane as a helical; Voltage-sensor segment; it reads GVTLRVLRMMRIFWVIKLARH. The Cytoplasmic portion of the chain corresponds to 303–317; the sequence is FIGLQTLGLTLKRCY. A helical transmembrane segment spans residues 318–339; the sequence is REMAMLLVFICVAMAIFSALSQ. At 340-357 the chain is on the extracellular side; it reads LLEHGLDLETSNKDFASI. Residues 358–369 constitute an intramembrane region (helical); that stretch reads PAACWWVIISMT. Positions 370-375 match the Selectivity filter motif; the sequence is TVGYGD. An intramembrane segment occupies 370-377; sequence TVGYGDMY. At 378–384 the chain is on the extracellular side; that stretch reads PITVPGR. A helical transmembrane segment spans residues 385 to 413; that stretch reads ILGGVCVVSGIVLLALPITFIYHSFVQCY. Residues 414–433 lie on the Cytoplasmic side of the membrane; it reads HELKFRSARYSRSLSAEFLN.

It belongs to the potassium channel family. G (TC 1.A.1.2) subfamily. Kv6.3/KCNG3 sub-subfamily. Heterotetramer with KCNB1. Does not form homomultimers.

The protein localises to the cell membrane. The protein resides in the cytoplasm. Regulatory subunit of the voltage-gated potassium (Kv) channel which, when coassembled with KCNB1, modulates the kinetics parameters of the heterotetrameric channel namely the inactivation and deactivation rate. Potassium channel subunit that does not form functional channels by itself. Reduces the deactivation rate. Moderately acceleratee activation. This Mus musculus (Mouse) protein is Voltage-gated potassium channel regulatory subunit KCNG3.